The chain runs to 359 residues: DNA-directed RNA polymerase RPB3-11 homolog (359 aa).

In the N-terminal section; belongs to the archaeal RpoD/eukaryotic RPB3 RNA polymerase subunit family. It in the C-terminal section; belongs to the archaeal RpoL/eukaryotic RPB11/RPC19 RNA polymerase subunit family. Part of the viral DNA-directed RNA polymerase that consists of 8 polII-like subunits (RPB1, RPB2, RPB3, RPB5, RPB6, RPB7, RPB9, RPB10), a capping enzyme and a termination factor.

It is found in the host cytoplasm. Its subcellular location is the virion. Its function is as follows. Component of the DNA-directed RNA polymerase (RNAP) that catalyzes the transcription in the cytoplasm of viral DNA into RNA using the four ribonucleoside triphosphates as substrates. The chain is DNA-directed RNA polymerase RPB3-11 homolog from Ornithodoros (relapsing fever ticks).